Consider the following 92-residue polypeptide: Small ribosomal subunit protein uS19 (92 aa).

This sequence belongs to the universal ribosomal protein uS19 family.

Functionally, protein S19 forms a complex with S13 that binds strongly to the 16S ribosomal RNA. The sequence is that of Small ribosomal subunit protein uS19 from Legionella pneumophila (strain Paris).